Consider the following 171-residue polypeptide: uncharacterized protein (171 aa).

Belongs to the transferase hexapeptide repeat family.

This is an uncharacterized protein from Bacillus subtilis (strain 168).